The chain runs to 289 residues: ATP synthase mitochondrial F1 complex assembly factor 2 (289 aa).

The transit peptide at 1-40 (MWRIYPRLRDRWRGLLDRRLSDPTVSVWPGPAPQPPARAY) directs the protein to the mitochondrion. Lys-133 is subject to N6-succinyllysine.

This sequence belongs to the ATP12 family. In terms of assembly, interacts with ATP5F1B; involved in the assembly of the F1 component of the mitochondrial ATP synthase (ATPase). Interacts with FMC1.

The protein localises to the mitochondrion inner membrane. Functionally, plays a role in the assembly of the F1 component of the mitochondrial ATP synthase (ATPase). The chain is ATP synthase mitochondrial F1 complex assembly factor 2 from Mus musculus (Mouse).